Reading from the N-terminus, the 546-residue chain is ATP-dependent RNA helicase DBP2 (546 aa).

The segment at 1 to 56 (MTYGGRDQQYNKTNYKSRGGDFRGGRNSDRNSYNDRPQGGNYRGGFGGRSNYNQPQ) is disordered. Omega-N-methylarginine is present on residues arginine 18 and arginine 43. Positions 18–33 (RGGDFRGGRNSDRNSY) are enriched in basic and acidic residues. Phosphoserine occurs at positions 88 and 90. A Q motif motif is present at residues 113-141 (TTFDEAGFPDYVLNEVKAEGFDKPTGIQC). Positions 144-319 (WPMALSGRDM…ADYLNDPIQV (176 aa)) constitute a Helicase ATP-binding domain. 157-164 (AATGSGKT) is an ATP binding site. Positions 267-270 (DEAD) match the DEAD box motif. The region spanning 347 to 494 (RLNKYLETAS…NIPPELLKYD (148 aa)) is the Helicase C-terminal domain. Residue lysine 474 forms a Glycyl lysine isopeptide (Lys-Gly) (interchain with G-Cter in ubiquitin) linkage. The disordered stretch occupies residues 493–546 (YDRRSYGGGHPRYGGGRGGRGGYGRRGGYGGGRGGYGGNRQRDGGWGNRGRSNY). Gly residues predominate over residues 498-540 (YGGGHPRYGGGRGGRGGYGRRGGYGGGRGGYGGNRQRDGGWGN). The tract at residues 505–530 (YGGGRGGRGGYGRRGGYGGGRGGYGG) is RNA-binding RGG-box. Dimethylated arginine; alternate occurs at positions 509, 512, 518, and 525. Omega-N-methylarginine; alternate is present on residues arginine 509, arginine 512, arginine 518, and arginine 525.

It belongs to the DEAD box helicase family. DDX5/DBP2 subfamily. In terms of assembly, interacts with UPF1. Associates with polysomes.

It is found in the cytoplasm. It localises to the nucleus. The enzyme catalyses ATP + H2O = ADP + phosphate + H(+). ATP-dependent RNA helicase involved nonsense-mediated mRNA decay and ribosome biogenesis through rRNA processing. Associates directly with chromatin, correlating with transcriptional activity. Required for assembly of mRNA-binding proteins YRA1, NAB2, and MEX67 onto poly(A)+ RNA. This Saccharomyces cerevisiae (strain ATCC 204508 / S288c) (Baker's yeast) protein is ATP-dependent RNA helicase DBP2.